A 139-amino-acid polypeptide reads, in one-letter code: Large ribosomal subunit protein bL17 (139 aa).

This sequence belongs to the bacterial ribosomal protein bL17 family. Part of the 50S ribosomal subunit. Contacts protein L32.

The protein is Large ribosomal subunit protein bL17 of Myxococcus xanthus (strain DK1622).